A 185-amino-acid chain; its full sequence is Large ribosomal subunit protein uL22 (185 aa).

Belongs to the universal ribosomal protein uL22 family. In terms of assembly, part of the 50S ribosomal subunit.

Its function is as follows. This protein binds specifically to 23S rRNA. It makes multiple contacts with different domains of the 23S rRNA in the assembled 50S subunit and ribosome. In terms of biological role, the globular domain of the protein is located near the polypeptide exit tunnel on the outside of the subunit, while an extended beta-hairpin is found that lines the wall of the exit tunnel in the center of the 70S ribosome. The chain is Large ribosomal subunit protein uL22 from Pyrobaculum islandicum (strain DSM 4184 / JCM 9189 / GEO3).